The following is a 128-amino-acid chain: uncharacterized protein (128 aa).

Helical transmembrane passes span 13-35 (FQMASFITSGLLVIIGLYGVFFV), 42-64 (IIALEILGSGVNLALIAIGYNGG), and 90-112 (LVLTNIVIEASMLAVMLGVSIIL).

It is found in the cell membrane. This is an uncharacterized protein from Methanocaldococcus jannaschii (strain ATCC 43067 / DSM 2661 / JAL-1 / JCM 10045 / NBRC 100440) (Methanococcus jannaschii).